A 369-amino-acid chain; its full sequence is Core histone macro-H2A.1 (369 aa).

The region spanning Ser-2–Lys-117 is the Histone H2A domain. Residues Lys-7 and Lys-9 each carry the N6-lactoyllysine; alternate modification. Lys-18 carries the post-translational modification N6-methyllysine. Lys-116 bears the N6-acetyllysine; alternate mark. Residue Lys-116 forms a Glycyl lysine isopeptide (Lys-Gly) (interchain with G-Cter in ubiquitin); alternate linkage. A Glycyl lysine isopeptide (Lys-Gly) (interchain with G-Cter in ubiquitin) cross-link involves residue Lys-117. An N6-acetyllysine; alternate modification is found at Lys-123. Lys-123 carries the post-translational modification N6,N6-dimethyllysine; alternate. Lys-123 is covalently cross-linked (Glycyl lysine isopeptide (Lys-Gly) (interchain with G-Cter in SUMO2); alternate). Residues Ile-128–Thr-180 are disordered. Thr-129 is subject to Phosphothreonine. Basic residues predominate over residues Pro-144–Lys-160. Residue Lys-167 forms a Glycyl lysine isopeptide (Lys-Gly) (interchain with G-Cter in SUMO2) linkage. Ser-170 and Ser-173 each carry phosphoserine. Thr-178 bears the Phosphothreonine mark. The Macro domain occupies Thr-184–Asp-367. A Glycyl lysine isopeptide (Lys-Gly) (interchain with G-Cter in SUMO2) cross-link involves residue Lys-189. A glycoprotein-binding residues include Asp-203, Ile-204, Val-226, Ser-275, Gly-312, Ser-313, Gly-314, and Asn-316. Lys-320 participates in a covalent cross-link: Glycyl lysine isopeptide (Lys-Gly) (interchain with G-Cter in SUMO2).

This sequence belongs to the histone H2A family. The nucleosome is a histone octamer containing two molecules each of H2A, H2B, H3 and H4 assembled in one H3-H4 heterotetramer and two H2A-H2B heterodimers. Interacts with HDAC1 and HDAC2. Interacts with SPOP. Part of a complex consisting of MACROH2A1, CUL3 and SPOP. As to quaternary structure, interacts with PARP1. Monoubiquitinated at either Lys-116 or Lys-117. May also be polyubiquitinated. Ubiquitination is mediated by the CUL3/SPOP E3 complex and does not promote proteasomal degradation. Instead, it is required for enrichment in inactive X chromosome chromatin. In terms of tissue distribution, widely expressed, with high levels in testis. Present in liver, kidney and adrenal gland (at protein level). In the liver, present in hepatocytes and at a lesser extent in cells of the bile ducts. In the kidney, expressed in proximal and distal convoluted tubules and in straight proximal tubules. In the adrenal gland, present in inner cells of the cortex and medulla.

It is found in the nucleus. Its subcellular location is the chromosome. Functionally, variant histone H2A which replaces conventional H2A in a subset of nucleosomes where it represses transcription. Nucleosomes wrap and compact DNA into chromatin, limiting DNA accessibility to the cellular machineries which require DNA as a template. Histones thereby play a central role in transcription regulation, DNA repair, DNA replication and chromosomal stability. DNA accessibility is regulated via a complex set of post-translational modifications of histones, also called histone code, and nucleosome remodeling. Involved in stable X chromosome inactivation. Inhibits the binding of transcription factors, including NF-kappa-B, and interferes with the activity of remodeling SWI/SNF complexes. Inhibits histone acetylation by EP300 and recruits class I HDACs, which induces a hypoacetylated state of chromatin. Isoform that specifically binds poly-ADP-ribose and O-acetyl-ADP-ribose and plays a key role in NAD(+) metabolism. Able to bind to the ends of poly-ADP-ribose chains created by PARP1 and cap them. This prevents PARP1 from further addition of ADP-ribose and thus limits the consumption of nuclear NAD(+), allowing the cell to maintain proper NAD(+) levels in both the nucleus and the mitochondria to promote proper mitochondrial respiration. Increases the expression of genes involved in redox metabolism, including SOD3. Its function is as follows. In contrast to isoform 1, does not bind poly-ADP-ribose. Represses SOD3 gene expression. In Mus musculus (Mouse), this protein is Core histone macro-H2A.1.